The following is a 112-amino-acid chain: Ribonuclease P protein component (112 aa).

It belongs to the RnpA family. Consists of a catalytic RNA component (M1 or rnpB) and a protein subunit.

It catalyses the reaction Endonucleolytic cleavage of RNA, removing 5'-extranucleotides from tRNA precursor.. RNaseP catalyzes the removal of the 5'-leader sequence from pre-tRNA to produce the mature 5'-terminus. It can also cleave other RNA substrates such as 4.5S RNA. The protein component plays an auxiliary but essential role in vivo by binding to the 5'-leader sequence and broadening the substrate specificity of the ribozyme. The sequence is that of Ribonuclease P protein component from Clostridium kluyveri (strain ATCC 8527 / DSM 555 / NBRC 12016 / NCIMB 10680 / K1).